The sequence spans 219 residues: Orotidine 5'-phosphate decarboxylase (219 aa).

Residues aspartate 10, lysine 32, 58–67, serine 113, 163–173, glycine 186, and arginine 187 each bind substrate; these read DFKVADIPYT and PGIGAQGGDPY. Lysine 60 serves as the catalytic Proton donor.

It belongs to the OMP decarboxylase family. Type 1 subfamily. As to quaternary structure, homodimer.

The catalysed reaction is orotidine 5'-phosphate + H(+) = UMP + CO2. It participates in pyrimidine metabolism; UMP biosynthesis via de novo pathway; UMP from orotate: step 2/2. Functionally, catalyzes the decarboxylation of orotidine 5'-monophosphate (OMP) to uridine 5'-monophosphate (UMP). In Thermoplasma volcanium (strain ATCC 51530 / DSM 4299 / JCM 9571 / NBRC 15438 / GSS1), this protein is Orotidine 5'-phosphate decarboxylase.